Here is a 306-residue protein sequence, read N- to C-terminus: MRQGLMAAVLFATFALTGCGTDSAGKSADQQLQVTATTSQIADAAENIGGKHVKVTSLMGPGVDPHLYKASQGDTKKLMSADVVLYSGLHLEGKMEDVLQKIGEQKQSAAVAEAIPKNKLIPAGEGKTFDPHVWFSIPLWIYAVDEIEAQFSKAMPQHADAFRKNAKEYKEDLQYLDKWSRKEIAHIPEKSRVLVTAHDAFAYFGNEYGFKVKGLQGLSTDSDYGLRDVQELVDLLTEKQIKAVFVESSVSEKSINAVVEGAKEKGHTVTIGGQLYSDAMGEKGTKEGTYEGMFRHNINTITKALK.

The signal sequence occupies residues 1–18; the sequence is MRQGLMAAVLFATFALTG. The N-palmitoyl cysteine moiety is linked to residue Cys-19. Cys-19 carries the S-diacylglycerol cysteine lipid modification. His-66, His-132, His-198, and Asp-278 together coordinate Mn(2+).

This sequence belongs to the bacterial solute-binding protein 9 family. In terms of assembly, the complex is probably composed of two ATP-binding proteins (MntB), two transmembrane proteins (MntC and MntD) and a solute-binding protein (MntA). Interacts with FloT.

The protein localises to the cell membrane. It localises to the membrane raft. Its function is as follows. Probably part of ATP-binding cassette (ABC) transport system MntABCD involved in manganese import. Binds manganese and delivers it to the membrane permease for translocation into the cytoplasm. This chain is Manganese-binding lipoprotein MntA, found in Bacillus subtilis (strain 168).